The sequence spans 65 residues: Large ribosomal subunit protein bL32 (65 aa).

Belongs to the bacterial ribosomal protein bL32 family.

This is Large ribosomal subunit protein bL32 (rpmF) from Rickettsia prowazekii (strain Madrid E).